Here is a 164-residue protein sequence, read N- to C-terminus: Small ribosomal subunit protein uS5 (164 aa).

The S5 DRBM domain occupies 10–73; that stretch reads LEERVVAINR…EDAKKNLIEV (64 aa).

This sequence belongs to the universal ribosomal protein uS5 family. In terms of assembly, part of the 30S ribosomal subunit. Contacts proteins S4 and S8.

Functionally, with S4 and S12 plays an important role in translational accuracy. In terms of biological role, located at the back of the 30S subunit body where it stabilizes the conformation of the head with respect to the body. The protein is Small ribosomal subunit protein uS5 of Streptococcus gordonii (strain Challis / ATCC 35105 / BCRC 15272 / CH1 / DL1 / V288).